The primary structure comprises 466 residues: MSIASVASVFNGDHAVGSQVTVRGWVRTRRDSKAGISFLALYDGSCFDPIQGVIPNNLPNYDDEVLKLTAGCSLVMTGDVVESPGAGQAFELQVTAVEVTGWVDDPDTYPMAAKRHSIEHLRELAHLRPRTNIIGAVARVRNCLSQAIHRFYHEQGFIWVSTPLITASDCEGAGEMFRVSTLDMENLPRTDAGKVDYDKDFFGKESFLTVSGQLNAETYACALSKVYTFGPTFRAENSNTTRHLAEFWMVEPEVAFATLDDAAKLAEDMLKYAFNAVLNERMDDLSFFNERVDKTVIERLQAFVSSDFAQVDYTDAVEILKNCGKKFEFAVEWGIDLQSEHERYLAEEHFKAPVVVKNYPKDIKAFYMRLNDDGKTVAAMDVLAPGIGEIIGGAQREERLDVLDARLAEMELSQEDYWWYRDLRRYGTVPHAGFGLGFERLVSYVTGVNNIRDVIPFPRAPRSASF.

It belongs to the class-II aminoacyl-tRNA synthetase family. Homodimer.

The protein localises to the cytoplasm. It carries out the reaction tRNA(Asn) + L-asparagine + ATP = L-asparaginyl-tRNA(Asn) + AMP + diphosphate + H(+). The polypeptide is Asparagine--tRNA ligase (Shewanella denitrificans (strain OS217 / ATCC BAA-1090 / DSM 15013)).